Consider the following 277-residue polypeptide: tRNA pseudouridine synthase A (277 aa).

The active-site Nucleophile is Asp-57. Tyr-115 contributes to the substrate binding site.

It belongs to the tRNA pseudouridine synthase TruA family. Homodimer.

The enzyme catalyses uridine(38/39/40) in tRNA = pseudouridine(38/39/40) in tRNA. Formation of pseudouridine at positions 38, 39 and 40 in the anticodon stem and loop of transfer RNAs. The chain is tRNA pseudouridine synthase A from Nitratidesulfovibrio vulgaris (strain DSM 19637 / Miyazaki F) (Desulfovibrio vulgaris).